The following is a 136-amino-acid chain: Large-conductance mechanosensitive channel (136 aa).

A run of 2 helical transmembrane segments spans residues 9–29 and 79–99; these read AFASRGNVIDMAVGIIIGAAF and IQTVIDFTIIAFAIFMGLKAI.

Belongs to the MscL family. As to quaternary structure, homopentamer.

The protein resides in the cell inner membrane. Channel that opens in response to stretch forces in the membrane lipid bilayer. May participate in the regulation of osmotic pressure changes within the cell. The sequence is that of Large-conductance mechanosensitive channel from Shewanella putrefaciens (strain CN-32 / ATCC BAA-453).